A 1161-amino-acid polypeptide reads, in one-letter code: Type IV pilus biogenesis factor PilY1 (1161 aa).

The signal sequence occupies residues 1–30 (MKSVLHQIGKTSLAAALSGAVLLSAQTTHA). Residues Asp-598, Asp-600, Asn-602, and Asp-606 each contribute to the Ca(2+) site. Residues 617-619 (RGD) form an integrin-binding motif RGD region. Ca(2+)-binding residues include Asp-849, Asn-851, Asp-853, Val-855, and Asp-857. Residues 1136–1161 (SGECLTVNPGPNTRGRQNWRPIEGKN) form a disordered region.

Belongs to the PilY1 family. In terms of assembly, interacts (via C-terminus) with host integrins alpha-V/beta-3 (ITGAV/ITGB3) and alpha-V/beta-5 (ITGAV/ITGB5).

It localises to the fimbrium. The protein resides in the membrane. Its subcellular location is the cytoplasm. It is found in the cytosol. Functionally, involved in pilus assembly, twitching motility and adhesion to host cells. Primes type IV pili (T4P) assembly and is required for inclusion of minor pilins PilV, PilW and PilX to the surface pili. Stabilizes assembled pilus fibers likely by antagonizing retraction mediated by PilT. Calcium-binding and calcium release by PilY1 seem to be essential for twitching motility and for regulation of pilus retraction dynamics of PilT. This chain is Type IV pilus biogenesis factor PilY1, found in Pseudomonas aeruginosa (strain ATCC 15692 / DSM 22644 / CIP 104116 / JCM 14847 / LMG 12228 / 1C / PRS 101 / PAO1).